A 103-amino-acid chain; its full sequence is Cystatin-A (103 aa).

At methionine 1 the chain carries N-acetylmethionine. A Secondary area of contact motif is present at residues 52-56 (QVVAG).

It belongs to the cystatin family.

The protein localises to the cytoplasm. This is an intracellular thiol proteinase inhibitor. The protein is Cystatin-A (Csta) of Rattus norvegicus (Rat).